Reading from the N-terminus, the 116-residue chain is Ribulose bisphosphate carboxylase small subunit 1 (116 aa).

This sequence belongs to the RuBisCO small chain family. In terms of assembly, heterohexadecamer of 8 large and 8 small subunits.

The protein localises to the cytoplasm. Its function is as follows. RuBisCO catalyzes two reactions: the carboxylation of D-ribulose 1,5-bisphosphate, the primary event in carbon dioxide fixation, as well as the oxidative fragmentation of the pentose substrate. Both reactions occur simultaneously and in competition at the same active site. Although the small subunit is not catalytic it is essential for maximal activity. In terms of biological role, can replace the endogenous type I ccbS gene in H.neapolitanus, reconstituting RuBisCO with about 10% of normal activity; the active enzyme is targeted to carboxysomes. The polypeptide is Ribulose bisphosphate carboxylase small subunit 1 (Hydrogenovibrio crunogenus (strain DSM 25203 / XCL-2) (Thiomicrospira crunogena)).